Reading from the N-terminus, the 449-residue chain is UNC93-like protein MFSD11 (449 aa).

Residues 8–28 (LFNIIILGVAFMFMFTAFQTC) form a helical membrane-spanning segment. N-linked (GlcNAc...) asparagine glycosylation is present at Asn40. Helical transmembrane passes span 53–73 (AIIYGVFSASNLITPPVVAIV), 74–94 (GPQLSMFASGLFYSMYIAVFN), 96–116 (PFPWSFYTASVFIGIAAAVLW), 138–158 (IFWALLQSSLFFGNLYVYFAW), and 170–190 (RTVFIALTVISLVGTVLFFLI). Phosphoserine is present on Ser204. Helical transmembrane passes span 239–259 (MLLLSITTAYTGLELTFFSGV), 277–297 (LIGLSGIFIGIGEILGGSLFG), 309–329 (PVVLLGILVHFIAFYLIFLNM), 359–379 (FLLGLGDSCFNTQLLSILGFL), 385–405 (APAFAIFKFVQSICAAVAFFY), and 410–430 (LLHWQLLVMVIFGFFGTLSFF).

The protein belongs to the unc-93 family.

The protein resides in the membrane. In Pongo abelii (Sumatran orangutan), this protein is UNC93-like protein MFSD11 (MFSD11).